The sequence spans 150 residues: Transcriptional regulator MraZ (150 aa).

2 consecutive SpoVT-AbrB domains span residues 5-52 (VTHL…PLPD) and 81-124 (AHDL…DAEA).

The protein belongs to the MraZ family. Forms oligomers.

Its subcellular location is the cytoplasm. The protein localises to the nucleoid. The chain is Transcriptional regulator MraZ from Alkalilimnicola ehrlichii (strain ATCC BAA-1101 / DSM 17681 / MLHE-1).